A 409-amino-acid chain; its full sequence is MSQAPNRLKPFFENLEFEQNDGKMILNFGPQHPSAHGQLKLVLELDGEKVVRAMPEVGFMHRGVEKMAENMTYQEFIPVTDRVDYIASSANNYAFCAAVEKLCAIEVPRRAQIIRVMLLELNRISSHLLFLATHALDVGAMSVFLYAFREREYVLDLIEKYCGARLTHSSIRIGGVPLDLPDGWCEELLKFCEKFPSDITLYEDLLSANRIWQARLIDVGVVSKELALSSGCSGVMLRASGIARDIRKEEPYLIYDELEFDVPYATKGDCYARYLLYMKEMRECVKILKQCVSKYQTSSPAIIADAPEYVSASKEQIMSQNYSLMQHFVLITQGLKPPKGEIYFASESPKGELGIYINSDGSASPYRLKIRTPSFWHCAIYEDMLVGQYVADVAAIIGSTNIILGEVDR.

Belongs to the complex I 49 kDa subunit family. In terms of assembly, NDH-1 is composed of 14 different subunits. Subunits NuoB, C, D, E, F, and G constitute the peripheral sector of the complex.

The protein localises to the cell inner membrane. The enzyme catalyses a quinone + NADH + 5 H(+)(in) = a quinol + NAD(+) + 4 H(+)(out). In terms of biological role, NDH-1 shuttles electrons from NADH, via FMN and iron-sulfur (Fe-S) centers, to quinones in the respiratory chain. The immediate electron acceptor for the enzyme in this species is believed to be ubiquinone. Couples the redox reaction to proton translocation (for every two electrons transferred, four hydrogen ions are translocated across the cytoplasmic membrane), and thus conserves the redox energy in a proton gradient. This chain is NADH-quinone oxidoreductase subunit D, found in Campylobacter concisus (strain 13826).